The following is a 169-amino-acid chain: Transcription antitermination protein NusB (169 aa).

The interval 150-169 is disordered; sequence AAATSRRTETAGGESNDAGS.

It belongs to the NusB family.

Its function is as follows. Involved in transcription antitermination. Required for transcription of ribosomal RNA (rRNA) genes. Binds specifically to the boxA antiterminator sequence of the ribosomal RNA (rrn) operons. This Rhodococcus jostii (strain RHA1) protein is Transcription antitermination protein NusB.